Reading from the N-terminus, the 263-residue chain is Fibroblast growth factor 23 (263 aa).

The signal sequence occupies residues 1 to 23; it reads MDVNRRIGVKDALLALLLALLQG. Residues Cys-103 and Cys-121 are joined by a disulfide bond. A glycan (N-linked (GlcNAc...) asparagine) is linked at Asn-124. A compositionally biased stretch (basic and acidic residues) spans 198 to 211; the sequence is VGRAEEGSDSRALQ. Positions 198-263 are disordered; the sequence is VGRAEEGSDS…GSPRSSGTVG (66 aa). Acidic residues predominate over residues 212-226; sequence EDDADLEVETEVEVG. Residues 227–245 are compositionally biased toward basic and acidic residues; sequence DDGRNASRERLQAPSDHDP. Asn-231 is a glycosylation site (N-linked (GlcNAc...) asparagine). Over residues 249–263 the composition is skewed to polar residues; the sequence is FSSNPGSPRSSGTVG.

The protein belongs to the heparin-binding growth factors family.

It localises to the secreted. This Tetraodon nigroviridis (Spotted green pufferfish) protein is Fibroblast growth factor 23 (fgf23).